A 135-amino-acid chain; its full sequence is ATP synthase epsilon chain (135 aa).

Belongs to the ATPase epsilon chain family. In terms of assembly, F-type ATPases have 2 components, CF(1) - the catalytic core - and CF(0) - the membrane proton channel. CF(1) has five subunits: alpha(3), beta(3), gamma(1), delta(1), epsilon(1). CF(0) has three main subunits: a, b and c.

It localises to the cell inner membrane. Functionally, produces ATP from ADP in the presence of a proton gradient across the membrane. In Brucella suis (strain ATCC 23445 / NCTC 10510), this protein is ATP synthase epsilon chain.